Consider the following 107-residue polypeptide: uncharacterized protein (107 aa).

Residues 86–107 (QVSNHEEDADVLETQDDNAEQV) form a disordered region. Acidic residues predominate over residues 92 to 107 (EDADVLETQDDNAEQV).

This is an uncharacterized protein from Rickettsia prowazekii (strain Madrid E).